The following is a 450-amino-acid chain: Interferon-induced protein 75 (450 aa).

Residues 1–108 (MFTLTKALEK…IFRSFRNVGY (108 aa)) form the HSR domain. Disordered stretches follow at residues 131–156 (CSLQ…APRV) and 170–225 (LDEQ…VKDD). Over residues 143-154 (QLSLPSHLSSAP) the composition is skewed to low complexity. A phosphoserine mark is found at S175 and S177. Over residues 197–212 (SRDHQRKDKEDSREMP) the composition is skewed to basic and acidic residues. Position 226 is a phosphoserine (S226). Disordered regions lie at residues 238–283 (VLCT…HGVQ) and 318–360 (AQTS…KNDA). A compositionally biased stretch (basic residues) spans 245–267 (KKARRKKRLNWSNSKRGRQKKKP). Residues 251–266 (KRLNWSNSKRGRQKKK) carry the Nuclear localization signal motif. A compositionally biased stretch (polar residues) spans 343–353 (TSTAGKTTQVP). One can recognise an SAND domain in the interval 358–439 (NDAVDFLSPT…RQLEQKGLLF (82 aa)).

Its subcellular location is the nucleus. This is Interferon-induced protein 75 (Ifi75) from Mus caroli (Ryukyu mouse).